The following is a 324-amino-acid chain: MKLQQLRYIVEVVNHNLNVSSTAEGLYTSQPGISKQVRMLEDELGIQIFARSGKHLTQVTPAGQEIIRIAREVLSKVDAIKSVAGEHTWPDKGSLYIATTHTQARYALPGVIKGFIERYPRVSLHMHQGSPTQIAEAVSKGNADFAIATEALHLYDDLVMLPCYHWNRSIVVTPDHPLAATSSVTIEALAQYPLVTYTFGFTGRSELDTAFNRAGLTPRIVFTATDADVIKTYVRLGLGVGVIASMAVDPLADPDLVRIDAHDIFSHSTTKIGFRRSTFLRSYMYDFIQRFAPHLTRDVVDTAVALRSNEEIEAMFQDIKLPEK.

The HTH lysR-type domain maps to 1 to 59 (MKLQQLRYIVEVVNHNLNVSSTAEGLYTSQPGISKQVRMLEDELGIQIFARSGKHLTQV). Residues 19-38 (VSSTAEGLYTSQPGISKQVR) constitute a DNA-binding region (H-T-H motif).

This sequence belongs to the LysR transcriptional regulatory family. In terms of assembly, homotetramer.

It localises to the cytoplasm. In terms of biological role, this protein is a positive regulator of gene expression for the cysteine regulon, a system of 10 or more loci involved in the biosynthesis of L-cysteine from inorganic sulfate. The inducer for CysB is N-acetylserine. CysB inhibits its own transcription. In Salmonella typhimurium (strain LT2 / SGSC1412 / ATCC 700720), this protein is HTH-type transcriptional regulator CysB (cysB).